We begin with the raw amino-acid sequence, 361 residues long: Phosphoserine aminotransferase (361 aa).

L-glutamate is bound by residues serine 9 and arginine 42. Residues alanine 76 to arginine 77, tryptophan 102, threonine 153, aspartate 173, and glutamine 196 each bind pyridoxal 5'-phosphate. Lysine 197 is modified (N6-(pyridoxal phosphate)lysine). Asparagine 238–threonine 239 contacts pyridoxal 5'-phosphate.

Belongs to the class-V pyridoxal-phosphate-dependent aminotransferase family. SerC subfamily. In terms of assembly, homodimer. It depends on pyridoxal 5'-phosphate as a cofactor.

The protein resides in the cytoplasm. It catalyses the reaction O-phospho-L-serine + 2-oxoglutarate = 3-phosphooxypyruvate + L-glutamate. The enzyme catalyses 4-(phosphooxy)-L-threonine + 2-oxoglutarate = (R)-3-hydroxy-2-oxo-4-phosphooxybutanoate + L-glutamate. It functions in the pathway amino-acid biosynthesis; L-serine biosynthesis; L-serine from 3-phospho-D-glycerate: step 2/3. The protein operates within cofactor biosynthesis; pyridoxine 5'-phosphate biosynthesis; pyridoxine 5'-phosphate from D-erythrose 4-phosphate: step 3/5. In terms of biological role, catalyzes the reversible conversion of 3-phosphohydroxypyruvate to phosphoserine and of 3-hydroxy-2-oxo-4-phosphonooxybutanoate to phosphohydroxythreonine. This chain is Phosphoserine aminotransferase, found in Serratia proteamaculans (strain 568).